Here is a 380-residue protein sequence, read N- to C-terminus: Tryptophan 2,3-dioxygenase (380 aa).

Substrate contacts are provided by residues 57 to 61 (FIITH) and Arg128. Residue His313 participates in heme binding. Position 328 (Thr328) interacts with substrate.

The protein belongs to the tryptophan 2,3-dioxygenase family. Homotetramer. Dimer of dimers. Requires heme as cofactor.

The catalysed reaction is L-tryptophan + O2 = N-formyl-L-kynurenine. It functions in the pathway amino-acid degradation; L-tryptophan degradation via kynurenine pathway; L-kynurenine from L-tryptophan: step 1/2. It participates in pigment biosynthesis; ommochrome biosynthesis. In terms of biological role, heme-dependent dioxygenase that catalyzes the oxidative cleavage of the L-tryptophan (L-Trp) pyrrole ring and converts L-tryptophan to N-formyl-L-kynurenine. Catalyzes the oxidative cleavage of the indole moiety. This is Tryptophan 2,3-dioxygenase from Drosophila ananassae (Fruit fly).